The sequence spans 259 residues: UDP-2,3-diacylglucosamine hydrolase (259 aa).

Asp-8, His-10, Asp-41, Asn-79, and His-114 together coordinate Mn(2+). 79-80 provides a ligand contact to substrate; the sequence is NR. Positions 122, 160, 164, 167, and 195 each coordinate substrate. Mn(2+)-binding residues include His-195 and His-197.

It belongs to the LpxH family. The cofactor is Mn(2+).

The protein localises to the cell inner membrane. The enzyme catalyses UDP-2-N,3-O-bis[(3R)-3-hydroxytetradecanoyl]-alpha-D-glucosamine + H2O = 2-N,3-O-bis[(3R)-3-hydroxytetradecanoyl]-alpha-D-glucosaminyl 1-phosphate + UMP + 2 H(+). Its pathway is glycolipid biosynthesis; lipid IV(A) biosynthesis; lipid IV(A) from (3R)-3-hydroxytetradecanoyl-[acyl-carrier-protein] and UDP-N-acetyl-alpha-D-glucosamine: step 4/6. Its function is as follows. Hydrolyzes the pyrophosphate bond of UDP-2,3-diacylglucosamine to yield 2,3-diacylglucosamine 1-phosphate (lipid X) and UMP by catalyzing the attack of water at the alpha-P atom. Involved in the biosynthesis of lipid A, a phosphorylated glycolipid that anchors the lipopolysaccharide to the outer membrane of the cell. This Edwardsiella ictaluri (strain 93-146) protein is UDP-2,3-diacylglucosamine hydrolase.